A 233-amino-acid polypeptide reads, in one-letter code: Type II methyltransferase M.MunI (233 aa).

This sequence belongs to the MT-A70-like family.

It catalyses the reaction a 2'-deoxyadenosine in DNA + S-adenosyl-L-methionine = an N(6)-methyl-2'-deoxyadenosine in DNA + S-adenosyl-L-homocysteine + H(+). Functionally, a methylase that recognizes the double-stranded sequence 5'-CAATTG-3', methylates A-3 on both strands, and protects the DNA from cleavage by the MunI endonuclease. The polypeptide is Type II methyltransferase M.MunI (Mycoplasma sp).